The sequence spans 275 residues: Tropinone reductase-like 2 (275 aa).

17 to 41 serves as a coordination point for NAD(+); sequence IITGGASGIGACTAELFHENGAKVV. Ser-150 contacts substrate. The active-site Proton acceptor is Tyr-163.

This sequence belongs to the short-chain dehydrogenases/reductases (SDR) family.

In terms of biological role, has no tropinone reductase activity. The sequence is that of Tropinone reductase-like 2 from Erythroxylum coca (Coca plant).